Reading from the N-terminus, the 689-residue chain is Ataxin-1-like (689 aa).

A compositionally biased stretch (basic and acidic residues) spans 1–19 (MKPVHERSQECLPPKKRDL). 3 disordered regions span residues 1–46 (MKPV…SEWS), 185–223 (ATPP…LDLA), and 242–297 (LHET…GEGQ). An interaction with NCOR2 and ATXN1 region spans residues 20-197 (PVTSEDMGRT…PPQAPSPAHS (178 aa)). The self-association stretch occupies residues 20 to 197 (PVTSEDMGRT…PPQAPSPAHS (178 aa)). 2 stretches are compositionally biased toward polar residues: residues 28 to 43 (RTTS…SDAS) and 200 to 219 (KAPS…STQP). Over residues 257-268 (QESQSALEAAAA) the composition is skewed to low complexity. Over residues 273-285 (RPRERNLVRRESE) the composition is skewed to basic and acidic residues. Ser284 carries the post-translational modification Phosphoserine. Position 330 is a phosphothreonine (Thr330). The tract at residues 357–405 (KEEPSPLNLSHHTPDHQGEGRGSARNPAELAEKSQARGFYPQSHQEPVK) is disordered. A Phosphoserine modification is found at Ser361. The AXH domain occupies 457 to 588 (PPPITSSHLP…SISLQSLNSN (132 aa)). The residue at position 615 (Ser615) is a Phosphoserine. Positions 617–647 (ELCDSEGKSQPAGEGSRVVEPSQPESGAQAC) are disordered.

The protein belongs to the ATXN1 family. In terms of assembly, homodimer. Interacts with CIC. Interacts (via AXH domain) with NCOR2. Interacts with ATXN1. Directly interacts with RBPJ; this interaction is disrupted in the presence of Notch intracellular domain. Competes with ATXN1 for RBPJ-binding. Found in a complex with CIC and ATXN1. In terms of tissue distribution, expressed in cerebellum and cerebral cortex.

It is found in the nucleus. The protein localises to the cell projection. The protein resides in the dendrite. Its function is as follows. Chromatin-binding factor that repress Notch signaling in the absence of Notch intracellular domain by acting as a CBF1 corepressor. Binds to the HEY promoter and might assist, along with NCOR2, RBPJ-mediated repression. Can suppress ATXN1 cytotoxicity in spinocerebellar ataxia type 1 (SCA1). In concert with CIC and ATXN1, involved in brain development. This chain is Ataxin-1-like (ATXN1L), found in Homo sapiens (Human).